Here is a 552-residue protein sequence, read N- to C-terminus: 2-methyl-1,2-propanediol dehydrogenase (552 aa).

The protein belongs to the GMC oxidoreductase family. The cofactor is FAD.

Its subcellular location is the cytoplasm. It catalyses the reaction 2-methylpropane-1,2-diol + NAD(+) = 2-hydroxy-2-methylpropanal + NADH + H(+). In terms of biological role, involved in the degradation of methyl tert-butyl ether (MTBE). Catalyzes the conversion of 2-methyl 1,2-propanediol (2-M1,2-PD) to hydroxyisobutyraldehyde. The sequence is that of 2-methyl-1,2-propanediol dehydrogenase from Mycolicibacterium austroafricanum (Mycobacterium austroafricanum).